Reading from the N-terminus, the 497-residue chain is uncharacterized protein (497 aa).

Residues 474-497 form a disordered region; sequence DPRNPFSNGKPSGWSDEDVAWLKR. Residues 488–497 are compositionally biased toward acidic residues; that stretch reads SDEDVAWLKR.

This is an uncharacterized protein from Bacillus anthracis.